The chain runs to 542 residues: CTP synthase (542 aa).

An amidoligase domain region spans residues 1–265 (MTRYIFVTGG…DDFVVERFGL (265 aa)). Ser-13 contributes to the CTP binding site. Ser-13 serves as a coordination point for UTP. Residues 14–19 (SLGKGI) and Asp-71 each bind ATP. Mg(2+) contacts are provided by Asp-71 and Glu-139. CTP is bound by residues 146-148 (DIE), 186-191 (KTKPTQ), and Lys-222. UTP contacts are provided by residues 186–191 (KTKPTQ) and Lys-222. Residues 290 to 541 (TIAMVGKYME…VKAALAQKNK (252 aa)) enclose the Glutamine amidotransferase type-1 domain. Gly-351 contributes to the L-glutamine binding site. Residue Cys-378 is the Nucleophile; for glutamine hydrolysis of the active site. L-glutamine contacts are provided by residues 379 to 382 (LGMQ), Glu-402, and Arg-469. Active-site residues include His-514 and Glu-516.

Belongs to the CTP synthase family. As to quaternary structure, homotetramer.

The enzyme catalyses UTP + L-glutamine + ATP + H2O = CTP + L-glutamate + ADP + phosphate + 2 H(+). It catalyses the reaction L-glutamine + H2O = L-glutamate + NH4(+). It carries out the reaction UTP + NH4(+) + ATP = CTP + ADP + phosphate + 2 H(+). It functions in the pathway pyrimidine metabolism; CTP biosynthesis via de novo pathway; CTP from UDP: step 2/2. With respect to regulation, allosterically activated by GTP, when glutamine is the substrate; GTP has no effect on the reaction when ammonia is the substrate. The allosteric effector GTP functions by stabilizing the protein conformation that binds the tetrahedral intermediate(s) formed during glutamine hydrolysis. Inhibited by the product CTP, via allosteric rather than competitive inhibition. Functionally, catalyzes the ATP-dependent amination of UTP to CTP with either L-glutamine or ammonia as the source of nitrogen. Regulates intracellular CTP levels through interactions with the four ribonucleotide triphosphates. This Pseudomonas putida (strain W619) protein is CTP synthase.